Here is a 382-residue protein sequence, read N- to C-terminus: Na(+)/H(+) antiporter NhaA (382 aa).

Helical transmembrane passes span 14–34 (AGGILLVIAAAIAMIIANSSF), 49–69 (MSVSHWINDGLMAVFFLLIGL), 87–107 (IFPAIAAVGGMLAPALVYVAF), 117–137 (GWAIPAATDIAFALGIMALLG), 146–166 (VFLLALAIIDDLGVVVIIAFF), 171–191 (LSVLALVIGFVMTGILFLLNS), 205–225 (FILWVSVLQSGVHATLAGVVL), 247–267 (ALHPYVAFGILPLFAFANAGI), 285–305 (VALGLFLGKPLGIFSFSYVAV), 321–341 (IFAVSVLCGIGFTMSIFISSL), and 356–376 (LGILMGSTLAAVVGYILLHIS).

The protein belongs to the NhaA Na(+)/H(+) (TC 2.A.33) antiporter family.

It is found in the cell inner membrane. The catalysed reaction is Na(+)(in) + 2 H(+)(out) = Na(+)(out) + 2 H(+)(in). In terms of biological role, na(+)/H(+) antiporter that extrudes sodium in exchange for external protons. The polypeptide is Na(+)/H(+) antiporter NhaA (Aliivibrio salmonicida (strain LFI1238) (Vibrio salmonicida (strain LFI1238))).